We begin with the raw amino-acid sequence, 364 residues long: Dihydroorotate dehydrogenase (quinone) (364 aa).

FMN contacts are provided by residues Ala61–Lys65 and Thr85. Lys65 lines the substrate pocket. Position 110 to 114 (Asn110 to Phe114) interacts with substrate. Residues Asn139 and Asn170 each coordinate FMN. Asn170 provides a ligand contact to substrate. Ser173 serves as the catalytic Nucleophile. Asn175 serves as a coordination point for substrate. The FMN site is built by Lys214 and Ala242. Asn243–Thr244 serves as a coordination point for substrate. FMN is bound by residues Gly266, Gly295, and Tyr316–Ser317.

This sequence belongs to the dihydroorotate dehydrogenase family. Type 2 subfamily. In terms of assembly, monomer. It depends on FMN as a cofactor.

The protein localises to the cell membrane. It carries out the reaction (S)-dihydroorotate + a quinone = orotate + a quinol. It participates in pyrimidine metabolism; UMP biosynthesis via de novo pathway; orotate from (S)-dihydroorotate (quinone route): step 1/1. In terms of biological role, catalyzes the conversion of dihydroorotate to orotate with quinone as electron acceptor. The protein is Dihydroorotate dehydrogenase (quinone) of Rhodopseudomonas palustris (strain TIE-1).